The sequence spans 97 residues: YcgL domain-containing protein PputW619_3899 (97 aa).

The region spanning 3 to 87 (RICSIYKSPR…AEDEYIEHLP (85 aa)) is the YcgL domain.

The polypeptide is YcgL domain-containing protein PputW619_3899 (Pseudomonas putida (strain W619)).